Consider the following 391-residue polypeptide: MKLTLISSCVALAFMALATEAAPSGKKLSIPLTKNTNYKPSAKNAIQKALAKYHRFRTTSSSNSTSTEGTGSVPVTDYYNDIEYYGKVTVGTPGVTLKLDFDTGSSDLWFASTLCTNCGSSQTKYNPNQSSTYAKDGRTWSISYGDGSSASGILGTDTVTLGGLKITKQTIELAKREATSFQSGPSYGLLGLGFDTITTVRGVKTPVDNLISQGLISKPIFGVYLGKESNGGGGEYIFGGYDSSKYSGSLTTIPVDNSNGWYGITIKGTTIGSSKVSSSFSAILDTGTTLLILPNNVASAVARSYGASDNGDGTYTIDCDTSSFKPLVFSIGSSTFEVPADSLVFEQDGSTCYAGFGYGDYDFAIFGDVFLKNNYVVFNQEVPEVQIAPIA.

A signal peptide spans M1–A21. Positions A22–E68 are cleaved as a propeptide — activation peptide. The Peptidase A1 domain maps to Y84–A388. D102 is an active-site residue. An intrachain disulfide couples C115 to C118. D285 is a catalytic residue. An intrachain disulfide couples C319 to C352.

This sequence belongs to the peptidase A1 family.

The catalysed reaction is Hydrolysis of proteins with broad specificity similar to that of pepsin A, preferring hydrophobic residues at P1 and P1'. Clots milk and activates trypsinogen. Does not cleave 4-Gln-|-His-5, but does cleave 10-His-|-Leu-11 and 12-Val-|-Glu-13 in B chain of insulin.. The protein is Rhizopuspepsin-2 of Rhizopus niveus.